Consider the following 1939-residue polypeptide: Myosin-6 (1939 aa).

Residues 32-81 (DIRTECFVPDDKEEFVKAKIVSREGGKVTAETENGKTVTVKEDQVMQQNP) enclose the Myosin N-terminal SH3-like domain. The Myosin motor domain maps to 85-780 (DKIEDMAMLT…LLGLLEEMRD (696 aa)). Lys-129 carries the N6,N6,N6-trimethyllysine modification. 178–185 (GESGAGKT) is an ATP binding site. Thr-379 carries the post-translational modification Phosphothreonine. Ser-417 is subject to Phosphoserine. Actin-binding stretches follow at residues 657-679 (LNKLMTNLRTTHPHFVRCIIPNE) and 759-773 (KFGHTKVFFKAGLLG). Residues 783–812 (LSRIITRIQAQARGQLMRIEFKKMVERRDA) enclose the IQ domain. Positions 842–1939 (LKSAETEKEM…GAKQKMHDEE (1098 aa)) form a coiled coil. Phosphoserine is present on residues Ser-1090 and Ser-1139. The residue at position 1261 (Tyr-1261) is a Phosphotyrosine. The residue at position 1271 (Ser-1271) is a Phosphoserine. Phosphothreonine is present on residues Thr-1277 and Thr-1284. Ser-1309 carries the phosphoserine modification. Phosphotyrosine is present on Tyr-1310. Thr-1311 bears the Phosphothreonine mark. Ser-1512 bears the Phosphoserine mark. Thr-1515 and Thr-1681 each carry phosphothreonine. Positions 1908-1939 (AEERADIAESQVNKLRAKSRDIGAKQKMHDEE) are disordered. Residues 1925–1939 (KSRDIGAKQKMHDEE) show a composition bias toward basic and acidic residues.

The protein belongs to the TRAFAC class myosin-kinesin ATPase superfamily. Myosin family. As to quaternary structure, muscle myosin is a hexameric protein that consists of 2 heavy chain subunits (MHC), 2 alkali light chain subunits (MLC) and 2 regulatory light chain subunits (MLC-2).

Its subcellular location is the cytoplasm. The protein localises to the myofibril. In terms of biological role, muscle contraction. The sequence is that of Myosin-6 (MYH6) from Mesocricetus auratus (Golden hamster).